A 346-amino-acid chain; its full sequence is Phenylalanine--tRNA ligase alpha subunit (346 aa).

A Mg(2+)-binding site is contributed by E259.

Belongs to the class-II aminoacyl-tRNA synthetase family. Phe-tRNA synthetase alpha subunit type 1 subfamily. Tetramer of two alpha and two beta subunits. Requires Mg(2+) as cofactor.

Its subcellular location is the cytoplasm. It carries out the reaction tRNA(Phe) + L-phenylalanine + ATP = L-phenylalanyl-tRNA(Phe) + AMP + diphosphate + H(+). The sequence is that of Phenylalanine--tRNA ligase alpha subunit from Lactococcus lactis subsp. lactis (strain IL1403) (Streptococcus lactis).